The primary structure comprises 263 residues: 3-deoxy-manno-octulosonate cytidylyltransferase (263 aa).

It belongs to the KdsB family.

The protein localises to the cytoplasm. It carries out the reaction 3-deoxy-alpha-D-manno-oct-2-ulosonate + CTP = CMP-3-deoxy-beta-D-manno-octulosonate + diphosphate. It functions in the pathway nucleotide-sugar biosynthesis; CMP-3-deoxy-D-manno-octulosonate biosynthesis; CMP-3-deoxy-D-manno-octulosonate from 3-deoxy-D-manno-octulosonate and CTP: step 1/1. It participates in bacterial outer membrane biogenesis; lipopolysaccharide biosynthesis. Functionally, activates KDO (a required 8-carbon sugar) for incorporation into bacterial lipopolysaccharide in Gram-negative bacteria. This is 3-deoxy-manno-octulosonate cytidylyltransferase from Burkholderia thailandensis (strain ATCC 700388 / DSM 13276 / CCUG 48851 / CIP 106301 / E264).